A 906-amino-acid polypeptide reads, in one-letter code: Protein translocase subunit SecA (906 aa).

Residues Gln86, 104 to 108, and Asp499 each bind ATP; that span reads GEGKT. A disordered region spans residues 862–885; the sequence is KPVVSRIDPKDRNPDDPTSWGRVS. Zn(2+) is bound by residues Cys890, Cys892, Cys901, and His902.

This sequence belongs to the SecA family. In terms of assembly, monomer and homodimer. Part of the essential Sec protein translocation apparatus which comprises SecA, SecYEG and auxiliary proteins SecDF-YajC and YidC. Zn(2+) is required as a cofactor.

It is found in the cell inner membrane. It localises to the cytoplasm. It carries out the reaction ATP + H2O + cellular proteinSide 1 = ADP + phosphate + cellular proteinSide 2.. Part of the Sec protein translocase complex. Interacts with the SecYEG preprotein conducting channel. Has a central role in coupling the hydrolysis of ATP to the transfer of proteins into and across the cell membrane, serving both as a receptor for the preprotein-SecB complex and as an ATP-driven molecular motor driving the stepwise translocation of polypeptide chains across the membrane. This Rickettsia massiliae (strain Mtu5) protein is Protein translocase subunit SecA.